The following is a 127-amino-acid chain: Ribonuclease P protein component (127 aa).

It belongs to the RnpA family. As to quaternary structure, consists of a catalytic RNA component (M1 or rnpB) and a protein subunit.

The catalysed reaction is Endonucleolytic cleavage of RNA, removing 5'-extranucleotides from tRNA precursor.. RNaseP catalyzes the removal of the 5'-leader sequence from pre-tRNA to produce the mature 5'-terminus. It can also cleave other RNA substrates such as 4.5S RNA. The protein component plays an auxiliary but essential role in vivo by binding to the 5'-leader sequence and broadening the substrate specificity of the ribozyme. This chain is Ribonuclease P protein component, found in Corynebacterium urealyticum (strain ATCC 43042 / DSM 7109).